The following is a 56-amino-acid chain: LPAVSVDCSEYPKPDCTTEERPLCGSDNKTYGNKCNFCNAVVESNGTLTLSHFGKC.

The region spanning 6–56 (VDCSEYPKPDCTTEERPLCGSDNKTYGNKCNFCNAVVESNGTLTLSHFGKC) is the Kazal-like domain. Cystine bridges form between cysteine 8-cysteine 38, cysteine 16-cysteine 35, and cysteine 24-cysteine 56. Residue asparagine 45 is glycosylated (N-linked (GlcNAc...) asparagine).

It localises to the secreted. This Francolinus pondicerianus (Grey francolin) protein is Ovomucoid.